The primary structure comprises 348 residues: MGIRIQELRKQFEDFTALAGIDLDIRQGELLALLGPSGSGKTTLLRIIAGLEHADAGRVLFGDEDATTMSVQARRVGFVFQHYALFKHMSVYENVAFGLRVRRGKARWPESQISARVFELLSLVQLDGLEQRYPMQLSGGQRQRVALARALAIEPRVLLLDEPFGALDAQVRRDLRRWLREIHDRTGLTTVFVTHDQEEALELADRVAILNQGGIEQVASPDEVYNRPSSPFVYSFVGAVNRLPGCVGADGLEVAGIVLSCPPQLSGWGAVDLYVRPEDLVLDAQEGWSAIVLWSQRSGPRMRVRARLEHSAHEVEIELSSATDEYVEGQKLRLIPRHYGVFFSESGS.

In terms of domain architecture, ABC transporter spans 3–237 (IRIQELRKQF…PSSPFVYSFV (235 aa)). 35 to 42 (GPSGSGKT) contacts ATP.

Belongs to the ABC transporter superfamily. Sulfate/tungstate importer (TC 3.A.1.6) family. In terms of assembly, the complex is composed of two ATP-binding proteins (CysA), two transmembrane proteins (CysT and CysW) and a solute-binding protein (CysP).

It localises to the cell inner membrane. It carries out the reaction sulfate(out) + ATP + H2O = sulfate(in) + ADP + phosphate + H(+). The catalysed reaction is thiosulfate(out) + ATP + H2O = thiosulfate(in) + ADP + phosphate + H(+). In terms of biological role, part of the ABC transporter complex CysAWTP involved in sulfate/thiosulfate import. Responsible for energy coupling to the transport system. This is Sulfate/thiosulfate import ATP-binding protein CysA from Xylella fastidiosa (strain Temecula1 / ATCC 700964).